The chain runs to 152 residues: 6,7-dimethyl-8-ribityllumazine synthase (152 aa).

5-amino-6-(D-ribitylamino)uracil contacts are provided by residues phenylalanine 22, alanine 56–glutamate 58, and alanine 79–isoleucine 81. Alanine 84–threonine 85 lines the (2S)-2-hydroxy-3-oxobutyl phosphate pocket. Catalysis depends on histidine 87, which acts as the Proton donor. A 5-amino-6-(D-ribitylamino)uracil-binding site is contributed by phenylalanine 112. Arginine 126 lines the (2S)-2-hydroxy-3-oxobutyl phosphate pocket.

It belongs to the DMRL synthase family.

The catalysed reaction is (2S)-2-hydroxy-3-oxobutyl phosphate + 5-amino-6-(D-ribitylamino)uracil = 6,7-dimethyl-8-(1-D-ribityl)lumazine + phosphate + 2 H2O + H(+). The protein operates within cofactor biosynthesis; riboflavin biosynthesis; riboflavin from 2-hydroxy-3-oxobutyl phosphate and 5-amino-6-(D-ribitylamino)uracil: step 1/2. Functionally, catalyzes the formation of 6,7-dimethyl-8-ribityllumazine by condensation of 5-amino-6-(D-ribitylamino)uracil with 3,4-dihydroxy-2-butanone 4-phosphate. This is the penultimate step in the biosynthesis of riboflavin. The chain is 6,7-dimethyl-8-ribityllumazine synthase from Carboxydothermus hydrogenoformans (strain ATCC BAA-161 / DSM 6008 / Z-2901).